A 60-amino-acid polypeptide reads, in one-letter code: Andropin (60 aa).

The signal sequence occupies residues 1 to 23; that stretch reads MKYFVVLVVLALILAIAVGPSDA.

It belongs to the andropin family. In terms of tissue distribution, ejaculatory duct of adult males.

The protein resides in the secreted. Functionally, male-specific peptide with moderate activity against Gram-positive bacteria. The chain is Andropin (Anp) from Drosophila simulans (Fruit fly).